We begin with the raw amino-acid sequence, 375 residues long: Coproporphyrin III ferrochelatase (375 aa).

Fe-coproporphyrin III contacts are provided by serine 59 and tyrosine 128. Residues histidine 191 and glutamate 286 each coordinate Fe(2+).

This sequence belongs to the ferrochelatase family.

It is found in the cytoplasm. It catalyses the reaction Fe-coproporphyrin III + 2 H(+) = coproporphyrin III + Fe(2+). It functions in the pathway porphyrin-containing compound metabolism; protoheme biosynthesis. Its function is as follows. Involved in coproporphyrin-dependent heme b biosynthesis. Catalyzes the insertion of ferrous iron into coproporphyrin III to form Fe-coproporphyrin III. In Streptomyces coelicolor (strain ATCC BAA-471 / A3(2) / M145), this protein is Coproporphyrin III ferrochelatase.